A 182-amino-acid polypeptide reads, in one-letter code: Transcription termination/antitermination protein NusG (182 aa).

Residues 131 to 163 form the KOW domain; that stretch reads VGEQVRIQSGPFANQIGEVQEIEADKFKLTVLV.

This sequence belongs to the NusG family.

Its function is as follows. Participates in transcription elongation, termination and antitermination. The sequence is that of Transcription termination/antitermination protein NusG from Staphylococcus epidermidis (strain ATCC 35984 / DSM 28319 / BCRC 17069 / CCUG 31568 / BM 3577 / RP62A).